The sequence spans 278 residues: Putative cysteine-rich repeat secretory protein 19 (278 aa).

Residues 1-32 (MYSSSSVSKRFVLVPIVVVVTTQLLLVRNVSS) form the signal peptide. Gnk2-homologous domains lie at 39–147 (YLHH…SLDT) and 160–267 (PSAK…LYPF).

It belongs to the cysteine-rich repeat secretory protein family.

It localises to the secreted. This Arabidopsis thaliana (Mouse-ear cress) protein is Putative cysteine-rich repeat secretory protein 19 (CRRSP19).